Consider the following 506-residue polypeptide: Methylthioalkylmalate synthase 2, chloroplastic (506 aa).

A chloroplast-targeting transit peptide spans 1-49; it reads MASSLLTSSGMIPTTGSTVVGRSVLPFQSSLHSLRLTHSYKNPALFISC. Positions 85–359 constitute a Pyruvate carboxyltransferase domain; it reads VRVFDTTLRD…YTRIDTRQIM (275 aa).

This sequence belongs to the alpha-IPM synthase/homocitrate synthase family.

It is found in the plastid. The protein resides in the chloroplast. The enzyme catalyses an omega-(methylsulfanyl)-2-oxoalkanoate + acetyl-CoA + H2O = a 2-(omega-methylsulfanyl)alkylmalate + CoA + H(+). Functionally, catalyzes only the first methionine chain elongation cycle. This chain is Methylthioalkylmalate synthase 2, chloroplastic (MAM2), found in Arabidopsis thaliana (Mouse-ear cress).